Here is a 248-residue protein sequence, read N- to C-terminus: ATP synthase subunit a, chloroplastic (248 aa).

5 consecutive transmembrane segments (helical) span residues 38–58 (QVLI…TIVV), 96–116 (VPFI…GALL), 135–155 (INTT…AGIS), 200–220 (LVVV…VMFL), and 221–241 (GLFT…AYIG).

This sequence belongs to the ATPase A chain family. In terms of assembly, F-type ATPases have 2 components, CF(1) - the catalytic core - and CF(0) - the membrane proton channel. CF(1) has five subunits: alpha(3), beta(3), gamma(1), delta(1), epsilon(1). CF(0) has four main subunits: a, b, b' and c.

The protein resides in the plastid. It is found in the chloroplast thylakoid membrane. Functionally, key component of the proton channel; it plays a direct role in the translocation of protons across the membrane. The sequence is that of ATP synthase subunit a, chloroplastic from Amborella trichopoda.